The following is a 154-amino-acid chain: Myoglobin (154 aa).

In terms of domain architecture, Globin spans 2 to 148; that stretch reads GLSDQEWQQV…FRNDMASKYK (147 aa). A nitrite-binding site is contributed by His-65. O2 is bound at residue His-65. His-94 serves as a coordination point for heme b.

Monomeric.

It is found in the cytoplasm. It localises to the sarcoplasm. The enzyme catalyses Fe(III)-heme b-[protein] + nitric oxide + H2O = Fe(II)-heme b-[protein] + nitrite + 2 H(+). It catalyses the reaction H2O2 + AH2 = A + 2 H2O. Functionally, monomeric heme protein which primary function is to store oxygen and facilitate its diffusion within muscle tissues. Reversibly binds oxygen through a pentacoordinated heme iron and enables its timely and efficient release as needed during periods of heightened demand. Depending on the oxidative conditions of tissues and cells, and in addition to its ability to bind oxygen, it also has a nitrite reductase activity whereby it regulates the production of bioactive nitric oxide. Under stress conditions, like hypoxia and anoxia, it also protects cells against reactive oxygen species thanks to its pseudoperoxidase activity. This chain is Myoglobin (MB), found in Struthio camelus (Common ostrich).